The sequence spans 389 residues: Fructose-1,6-bisphosphate aldolase/phosphatase (389 aa).

Aspartate 17 (proton acceptor; for FBP phosphatase activity) is an active-site residue. Mg(2+) contacts are provided by aspartate 17, histidine 24, aspartate 57, and aspartate 58. Histidine 24 is a binding site for beta-D-fructose 1,6-bisphosphate. Histidine 24 is a binding site for dihydroxyacetone phosphate. Tyrosine 95 is a binding site for beta-D-fructose 1,6-bisphosphate. Glutamine 99 is a binding site for Mg(2+). 108-109 is a binding site for beta-D-fructose 1,6-bisphosphate; the sequence is GN. Position 136 (aspartate 136) interacts with Mg(2+). Lysine 137 is a beta-D-fructose 1,6-bisphosphate binding site. Lysine 137 contributes to the dihydroxyacetone phosphate binding site. The active-site Proton donor/acceptor; for FBP aldolase activity is tyrosine 233. Residues lysine 236, aspartate 237, and aspartate 238 each contribute to the Mg(2+) site. The Schiff-base intermediate with DHAP; for FBP aldolase activity role is filled by lysine 236. Residues 246–247, arginine 270, aspartate 291, and tyrosine 352 each bind beta-D-fructose 1,6-bisphosphate; that span reads QS. Residues arginine 270 and aspartate 291 each coordinate dihydroxyacetone phosphate.

It belongs to the FBP aldolase/phosphatase family. In terms of assembly, homooctamer; dimer of tetramers. Requires Mg(2+) as cofactor.

It carries out the reaction beta-D-fructose 1,6-bisphosphate + H2O = beta-D-fructose 6-phosphate + phosphate. The enzyme catalyses beta-D-fructose 1,6-bisphosphate = D-glyceraldehyde 3-phosphate + dihydroxyacetone phosphate. It functions in the pathway carbohydrate biosynthesis; gluconeogenesis. Functionally, catalyzes two subsequent steps in gluconeogenesis: the aldol condensation of dihydroxyacetone phosphate (DHAP) and glyceraldehyde-3-phosphate (GA3P) to fructose-1,6-bisphosphate (FBP), and the dephosphorylation of FBP to fructose-6-phosphate (F6P). This is Fructose-1,6-bisphosphate aldolase/phosphatase from Methanocaldococcus jannaschii (strain ATCC 43067 / DSM 2661 / JAL-1 / JCM 10045 / NBRC 100440) (Methanococcus jannaschii).